Consider the following 75-residue polypeptide: Exodeoxyribonuclease 7 small subunit (75 aa).

It belongs to the XseB family. Heterooligomer composed of large and small subunits.

The protein localises to the cytoplasm. The catalysed reaction is Exonucleolytic cleavage in either 5'- to 3'- or 3'- to 5'-direction to yield nucleoside 5'-phosphates.. Bidirectionally degrades single-stranded DNA into large acid-insoluble oligonucleotides, which are then degraded further into small acid-soluble oligonucleotides. This chain is Exodeoxyribonuclease 7 small subunit, found in Thermotoga maritima (strain ATCC 43589 / DSM 3109 / JCM 10099 / NBRC 100826 / MSB8).